We begin with the raw amino-acid sequence, 448 residues long: Tapasin (448 aa).

A signal peptide spans 1–20; that stretch reads MKSLSLLLAVALGLATAVSA. Residues 21–414 are Lumenal-facing; it reads GPAVIECWFV…LSGPSLEDSV (394 aa). The cysteines at positions 27 and 91 are disulfide-linked. The N-linked (GlcNAc...) asparagine glycan is linked to Asn-253. The 108-residue stretch at 292 to 399 folds into the Ig-like C1-type domain; sequence PKVSLMPATL…PASGRSAEVT (108 aa). The cysteines at positions 315 and 382 are disulfide-linked. The chain crosses the membrane as a helical span at residues 415-435; sequence GLFLSAFLLLGLFKALGWAAV. The Cytoplasmic portion of the chain corresponds to 436–448; sequence YLSTCKDSKKKAE.

As to quaternary structure, heterodimer with PDIA3; disulfide-linked. Obligatory mediator for the interaction between newly assembled MHC class I molecules, calreticulin, PDIA3 and TAP. Up to 4 MHC class I/tapasin complexes bind to 1 TAP. Interacts with HLA-G-B2M complex; this interaction is required for loading of high affinity peptides. On its own or as part of MHC class I peptide loading complex, interacts with ligand-free MR1 or MR1-B2M complex, providing for stable MR1 pools ready for metabolite antigen processing. Neutrophils, mostly in fully differentiated cells.

Its subcellular location is the endoplasmic reticulum membrane. In terms of biological role, involved in the association of MHC class I with transporter associated with antigen processing (TAP) and in the assembly of MHC class I with peptide (peptide loading). The protein is Tapasin of Homo sapiens (Human).